The primary structure comprises 206 residues: LexA repressor (206 aa).

A DNA-binding region (H-T-H motif) is located at residues 28-48 (VREIGQAVGLASSSTVHGHLS). Residues Ser128 and Lys166 each act as for autocatalytic cleavage activity in the active site.

The protein belongs to the peptidase S24 family. In terms of assembly, homodimer.

The enzyme catalyses Hydrolysis of Ala-|-Gly bond in repressor LexA.. Its function is as follows. Represses a number of genes involved in the response to DNA damage (SOS response), including recA and lexA. In the presence of single-stranded DNA, RecA interacts with LexA causing an autocatalytic cleavage which disrupts the DNA-binding part of LexA, leading to derepression of the SOS regulon and eventually DNA repair. In Bacillus cytotoxicus (strain DSM 22905 / CIP 110041 / 391-98 / NVH 391-98), this protein is LexA repressor.